A 154-amino-acid polypeptide reads, in one-letter code: Protein phosphatase 1 regulatory subunit 27 (154 aa).

ANK repeat units lie at residues 63–92 and 96–125; these read SGLAALHEAVLSGNLECVKLLVKYGADIHQ and TGWTPLHIACSDGYPDIARYLISLGADRDA.

Interacts with DYSF and PPP1CA.

In terms of biological role, inhibits phosphatase activity of protein phosphatase 1 (PP1) complexes. The protein is Protein phosphatase 1 regulatory subunit 27 (Ppp1r27) of Mus musculus (Mouse).